Consider the following 380-residue polypeptide: DNA replication and repair protein RecF (380 aa).

ATP is bound at residue 30–37; sequence GNNAQGKS.

The protein belongs to the RecF family.

The protein resides in the cytoplasm. The RecF protein is involved in DNA metabolism; it is required for DNA replication and normal SOS inducibility. RecF binds preferentially to single-stranded, linear DNA. It also seems to bind ATP. In Crocosphaera subtropica (strain ATCC 51142 / BH68) (Cyanothece sp. (strain ATCC 51142)), this protein is DNA replication and repair protein RecF.